The sequence spans 1228 residues: P3N-PIPO polyprotein (1228 aa).

A Peptidase S30 domain is found at 408–547; it reads IVGNSKINYI…RSVYAKMDQY (140 aa). Residues His456, Asp465, and Ser499 each act as for P1 proteinase activity in the active site. The Involved in interaction with stylet and aphid transmission signature appears at 598–601; that stretch reads KITC. The Involved in virions binding and aphid transmission motif lies at 856 to 858; it reads PTK. The 123-residue stretch at 882–1004 folds into the Peptidase C6 domain; the sequence is MYIAKKGYCY…DSEMKHYIVG (123 aa). Residues Cys890 and His963 each act as for helper component proteinase activity in the active site.

Belongs to the potyviridae P3N-PIPO polyprotein family. Interacts (via PIPO domain) with host PCaP1 protein; this interaction may help to anchor the movement complex to the plasma membrane from which the complex could move to the plasmodesmata. Potyviral RNA is expressed as two polyproteins which undergo post-translational proteolytic processing. Genome polyprotein is processed by NIa-pro, P1 and HC-pro proteinases resulting in the production of at least ten individual proteins. P3N-PIPO is cleaved by P1 and HC-pro proteinases resulting in the production of three individual proteins. The P1 proteinase and the HC-pro cleave only their respective C-termini autocatalytically.

The protein localises to the host cell junction. The protein resides in the host plasmodesma. The catalysed reaction is Hydrolyzes a Gly-|-Gly bond at its own C-terminus, commonly in the sequence -Tyr-Xaa-Val-Gly-|-Gly, in the processing of the potyviral polyprotein.. Required for aphid transmission and also has proteolytic activity. Only cleaves a Gly-Gly dipeptide at its own C-terminus. Interacts with virions and aphid stylets. Acts as a suppressor of RNA-mediated gene silencing, also known as post-transcriptional gene silencing (PTGS), a mechanism of plant viral defense that limits the accumulation of viral RNAs. May have RNA-binding activity. Functionally, allows efficient cell to cell propagation, by bypassing the host cell wall barrier. Transports viral genome to neighboring plant cells directly through plasmosdesmata, without any budding. This is P3N-PIPO polyprotein from Carica papaya (Papaya).